A 445-amino-acid chain; its full sequence is Oxysterols receptor LXR-alpha (445 aa).

Disordered regions lie at residues 1-34 (MSLWLEAAVPDVSPDSATELWKTEPQDAGDQGGN) and 62-86 (TALLPRAETLPEPTELRPQKRKKGP). Residues 1-94 (MSLWLEAAVP…GPAPKMLGNE (94 aa)) form a transactivation AF-1; required for ligand-independent transactivation function region. The segment at residues 93 to 168 (NELCSVCGDK…AGMREECVLS (76 aa)) is a DNA-binding region (nuclear receptor). NR C4-type zinc fingers lie at residues 96–116 (CSVCGDKASAFHYNVLSCEGC) and 132–156 (CHSGGHCPMDTYMRRKCQECRLRKC). A disordered region spans residues 178–200 (KRQEEEQAQATSVSPRVSSPPQV). Residues 189–200 (SVSPRVSSPPQV) show a composition bias toward low complexity. The residue at position 191 (Ser191) is a Phosphoserine. The segment at 203–445 (QLSPEQLGMI…LLSEIWDVHE (243 aa)) is transactivation AF-2; required for ligand-dependent transactivation function; mediates interaction with CCAR2. The NR LBD domain occupies 207-445 (EQLGMIEKLV…LLSEIWDVHE (239 aa)).

This sequence belongs to the nuclear hormone receptor family. NR1 subfamily. Heterodimer of NR1H3 and RXR (retinoic acid receptor). Interacts with CCAR2 (via N-terminus) in a ligand-independent manner. Interacts with SIRT1 and this interaction is inhibited by CCAR2. In terms of processing, ubiquitinated by UBR5, leading to its degradation: UBR5 specifically recognizes and binds ligand-bound NR1H3 when it is not associated with coactivators (NCOAs). In presence of NCOAs, the UBR5-degron is not accessible, preventing its ubiquitination and degradation. In terms of tissue distribution, in adults it is expressed in spleen, pituitary, lung, liver, and fat. Weaker expression is observed in several other tissues.

It is found in the nucleus. It localises to the cytoplasm. Nuclear receptor that exhibits a ligand-dependent transcriptional activation activity. Interaction with retinoic acid receptor (RXR) shifts RXR from its role as a silent DNA-binding partner to an active ligand-binding subunit in mediating retinoid responses through target genes defined by LXRES. LXRES are DR4-type response elements characterized by direct repeats of two similar hexanuclotide half-sites spaced by four nucleotides. Plays an important role in the regulation of cholesterol homeostasis, regulating cholesterol uptake through MYLIP-dependent ubiquitination of LDLR, VLDLR and LRP8. Interplays functionally with RORA for the regulation of genes involved in liver metabolism. Induces LPCAT3-dependent phospholipid remodeling in endoplasmic reticulum (ER) membranes of hepatocytes, driving SREBF1 processing and lipogenesis. Via LPCAT3, triggers the incorporation of arachidonate into phosphatidylcholines of ER membranes, increasing membrane dynamics and enabling triacylglycerols transfer to nascent very low-density lipoprotein (VLDL) particles. Via LPCAT3 also counteracts lipid-induced ER stress response and inflammation, likely by modulating SRC kinase membrane compartmentalization and limiting the synthesis of lipid inflammatory mediators. This chain is Oxysterols receptor LXR-alpha (Nr1h3), found in Rattus norvegicus (Rat).